The sequence spans 464 residues: UDP-N-acetylmuramoylalanine--D-glutamate ligase (464 aa).

112 to 118 (GTDGKTT) contacts ATP.

The protein belongs to the MurCDEF family.

The protein localises to the cytoplasm. The catalysed reaction is UDP-N-acetyl-alpha-D-muramoyl-L-alanine + D-glutamate + ATP = UDP-N-acetyl-alpha-D-muramoyl-L-alanyl-D-glutamate + ADP + phosphate + H(+). It functions in the pathway cell wall biogenesis; peptidoglycan biosynthesis. Its function is as follows. Cell wall formation. Catalyzes the addition of glutamate to the nucleotide precursor UDP-N-acetylmuramoyl-L-alanine (UMA). The polypeptide is UDP-N-acetylmuramoylalanine--D-glutamate ligase (Chlorobium phaeobacteroides (strain DSM 266 / SMG 266 / 2430)).